Consider the following 151-residue polypeptide: Deoxyuridine 5'-triphosphate nucleotidohydrolase (151 aa).

Substrate is bound by residues 70–72 (RSG), Asn83, 87–89 (LID), and Met97.

The protein belongs to the dUTPase family. It depends on Mg(2+) as a cofactor.

The catalysed reaction is dUTP + H2O = dUMP + diphosphate + H(+). It participates in pyrimidine metabolism; dUMP biosynthesis; dUMP from dCTP (dUTP route): step 2/2. This enzyme is involved in nucleotide metabolism: it produces dUMP, the immediate precursor of thymidine nucleotides and it decreases the intracellular concentration of dUTP so that uracil cannot be incorporated into DNA. The sequence is that of Deoxyuridine 5'-triphosphate nucleotidohydrolase from Actinobacillus succinogenes (strain ATCC 55618 / DSM 22257 / CCUG 43843 / 130Z).